The chain runs to 302 residues: MTLKIGTRGSKLATTQAGTIRDQLKYFGRDAELHIVTTPGDVNMSPVERIGVGVFTQALRDVLHAGECDVAVHSMKDLPTAADPRFHLVVPTRADSREALIARDGLTLAELPEGAKVGTSAPRRISQLKAIRPDLEILPLRGNIDTRMGKVTSGELDAVMLAYAGLTRVGMQDRATEVFDADIIMPAPAQGALAIECRADDTETVRALNMLMHADTFVSAVAERTVLNRLEAGCTAPVAAHATLDGYSGDTMTLTAGVYALDGSDQLVFSAEGDGARPEELGELVAQQLIDAGAANLLGDRS.

Position 234 is an S-(dipyrrolylmethanemethyl)cysteine (Cys-234).

This sequence belongs to the HMBS family. In terms of assembly, monomer. Requires dipyrromethane as cofactor.

The catalysed reaction is 4 porphobilinogen + H2O = hydroxymethylbilane + 4 NH4(+). It functions in the pathway porphyrin-containing compound metabolism; protoporphyrin-IX biosynthesis; coproporphyrinogen-III from 5-aminolevulinate: step 2/4. Tetrapolymerization of the monopyrrole PBG into the hydroxymethylbilane pre-uroporphyrinogen in several discrete steps. The chain is Porphobilinogen deaminase from Corynebacterium glutamicum (strain R).